Here is a 606-residue protein sequence, read N- to C-terminus: WD repeat-containing protein 1 (606 aa).

WD repeat units follow at residues 4-45 (EIKK…LRNI), 48-87 (PAIA…IWDT), 93-135 (LLKY…LWDT), 138-176 (SVGE…FFEG), 180-218 (KFKF…IYDG), 224-263 (VCAL…IWDV), 270-306 (STFP…YLDK), 311-351 (KPLR…YWDS), 358-408 (SFSG…KLDV), 432-474 (LKDQ…VYSI), 480-518 (KDEG…VFSV), 523-561 (SENN…VWTL), and 566-604 (TKVK…EWTI). An N6-acetyllysine mark is found at lysine 28, lysine 81, lysine 95, and lysine 115. Tyrosine 238 carries the phosphotyrosine modification. An N6-acetyllysine modification is found at lysine 480.

Belongs to the WD repeat AIP1 family.

Its subcellular location is the cytoplasm. The protein resides in the cytoskeleton. It is found in the cell projection. The protein localises to the podosome. Functionally, induces disassembly of actin filaments in conjunction with ADF/cofilin family proteins. Enhances cofilin-mediated actin severing. Involved in cytokinesis. Involved in chemotactic cell migration by restricting lamellipodial membrane protrusions. Involved in myocardium sarcomere organization. Required for cardiomyocyte growth at the postnatal and maintenance at the adult stage. Involved in neutrophil actin dynamics and migration. Involved in megakaryocyte maturation and platelet shedding. Required for the establishment of planar cell polarity (PCP) during follicular epithelium development and for cell shape changes during PCP; the function seems to implicate cooperation with CFL1 and/or DSTN/ADF. Involved in the generation/maintenance of cortical tension. Involved in assembly and maintenance of epithelial apical cell junctions and plays a role in the organization of the perijunctional actomyosin belt. The chain is WD repeat-containing protein 1 (Wdr1) from Mus musculus (Mouse).